The primary structure comprises 352 residues: Isoflavone-7-O-methyltransferase 6 (352 aa).

118-127 contacts substrate; the sequence is VLDPTLSGSY. S-adenosyl-L-methionine contacts are provided by Gly196, Asp219, Asp239, Met240, and Lys253. The active-site Proton acceptor is His257.

Belongs to the class I-like SAM-binding methyltransferase superfamily. Cation-independent O-methyltransferase family. COMT subfamily. Homodimer.

The catalysed reaction is a 7-hydroxyisoflavone + S-adenosyl-L-methionine = a 7-methoxyisoflavone + S-adenosyl-L-homocysteine + H(+). It participates in phytoalexin biosynthesis; medicarpin biosynthesis. In terms of biological role, transfers a methyl group to 7-hydroxyls of the isoflavones daidzein, genistein and 6,7,4'-trihydroxyisoflavone. Can also methylate (+)6a-hydroxymaackiain with lower efficiency. The chain is Isoflavone-7-O-methyltransferase 6 from Medicago sativa (Alfalfa).